Here is a 78-residue protein sequence, read N- to C-terminus: Large ribosomal subunit protein eL38 (78 aa).

Belongs to the eukaryotic ribosomal protein eL38 family. Component of the large ribosomal subunit (LSU). Mature yeast ribosomes consist of a small (40S) and a large (60S) subunit. The 40S small subunit contains 1 molecule of ribosomal RNA (18S rRNA) and 33 different proteins (encoded by 57 genes). The large 60S subunit contains 3 rRNA molecules (25S, 5.8S and 5S rRNA) and 46 different proteins (encoded by 81 genes).

The protein localises to the cytoplasm. Functionally, component of the ribosome, a large ribonucleoprotein complex responsible for the synthesis of proteins in the cell. The small ribosomal subunit (SSU) binds messenger RNAs (mRNAs) and translates the encoded message by selecting cognate aminoacyl-transfer RNA (tRNA) molecules. The large subunit (LSU) contains the ribosomal catalytic site termed the peptidyl transferase center (PTC), which catalyzes the formation of peptide bonds, thereby polymerizing the amino acids delivered by tRNAs into a polypeptide chain. The nascent polypeptides leave the ribosome through a tunnel in the LSU and interact with protein factors that function in enzymatic processing, targeting, and the membrane insertion of nascent chains at the exit of the ribosomal tunnel. This is Large ribosomal subunit protein eL38 from Saccharomyces cerevisiae (strain ATCC 204508 / S288c) (Baker's yeast).